The primary structure comprises 328 residues: Small ribosomal subunit protein bS1A (328 aa).

3 S1 motif domains span residues 31 to 100, 118 to 182, and 196 to 264; these read GDIV…LSIR, DATV…LSHR, and AQVV…LSTK. The interval 298 to 328 is disordered; that stretch reads EAQGIPYEPPTSVDDTDDEEDESLAVSAVDE. The span at 311 to 328 shows a compositional bias: acidic residues; that stretch reads DDTDDEEDESLAVSAVDE.

Belongs to the bacterial ribosomal protein bS1 family.

Binds mRNA. This is Small ribosomal subunit protein bS1A (rps1A) from Synechocystis sp. (strain ATCC 27184 / PCC 6803 / Kazusa).